A 389-amino-acid polypeptide reads, in one-letter code: uncharacterized protein (389 aa).

An N-terminal signal peptide occupies residues 1–23 (MHFAKLGAIGLLGSIICAYAASA).

The protein belongs to the IUNH family.

Its subcellular location is the endoplasmic reticulum lumen. This is an uncharacterized protein from Schizosaccharomyces pombe (strain 972 / ATCC 24843) (Fission yeast).